The following is a 71-amino-acid chain: DNA-directed RNA polymerase subunit omega (71 aa).

It belongs to the RNA polymerase subunit omega family. As to quaternary structure, the RNAP catalytic core consists of 2 alpha, 1 beta/beta' and 1 omega subunit. When a sigma factor is associated with the core the holoenzyme is formed, which can initiate transcription.

The enzyme catalyses RNA(n) + a ribonucleoside 5'-triphosphate = RNA(n+1) + diphosphate. Promotes RNA polymerase assembly. Latches the N- and C-terminal regions of the beta' subunit thereby facilitating its interaction with the beta and alpha subunits. This chain is DNA-directed RNA polymerase subunit omega, found in Wolinella succinogenes (strain ATCC 29543 / DSM 1740 / CCUG 13145 / JCM 31913 / LMG 7466 / NCTC 11488 / FDC 602W) (Vibrio succinogenes).